The following is a 109-amino-acid chain: Small ribosomal subunit protein bS6 (109 aa).

It belongs to the bacterial ribosomal protein bS6 family.

Its function is as follows. Binds together with bS18 to 16S ribosomal RNA. The protein is Small ribosomal subunit protein bS6 of Ehrlichia canis (strain Jake).